The primary structure comprises 440 residues: Dynein axonemal assembly factor 11 (440 aa).

4 LRR repeats span residues 20-43 (IFSL…HKWC), 44-65 (RDLK…VGRL), 66-89 (KKLE…GCES), and 90-110 (LQKL…ETLK). The 19-residue stretch at 128–146 (YQGYRQYVVATVPQLQSLD) folds into the LRRCT domain. Basic and acidic residues predominate over residues 178–192 (EEREKQKSNANEHPE). 2 disordered regions span residues 178-267 (EERE…RTLI) and 363-440 (PKKR…PPLM). Positions 193 to 211 (INQSLSESQNGTQQYPESS) are enriched in polar residues. The segment covering 236–259 (SRLEAHRHLEEKRRANEKEKEKPK) has biased composition (basic and acidic residues). One can recognise a CS domain in the interval 276 to 374 (VNEPKLDFSL…KRTIRPTSVT (99 aa)). The span at 369–378 (RPTSVTSNQN) shows a compositional bias: polar residues. Basic and acidic residues-rich tracts occupy residues 379 to 392 (NKKD…RELL) and 420 to 431 (GLEERPVSKDFV).

Belongs to the tilB family. In terms of assembly, interacts with dvl2. Interacts with kur. In terms of tissue distribution, expressed in kinocilia of hair cells.

The protein localises to the cytoplasm. It is found in the dynein axonemal particle. It localises to the cell projection. The protein resides in the cilium. Functionally, plays a crucial role in regulating cilia motility in pronephric tubules, cloaca and neural tube. Required for establishing left-right asymmetry of the body plan; controls cell fate and convergent extension (CE) movements during gastrulation, respectively, via the Wnt and the planar cell polarity (PCP) signaling pathways. Required for the proper development of renal glomeruli and tubules. In Danio rerio (Zebrafish), this protein is Dynein axonemal assembly factor 11 (dnaaf11).